Reading from the N-terminus, the 122-residue chain is Large ribosomal subunit protein bL20 (122 aa).

It belongs to the bacterial ribosomal protein bL20 family.

Its function is as follows. Binds directly to 23S ribosomal RNA and is necessary for the in vitro assembly process of the 50S ribosomal subunit. It is not involved in the protein synthesizing functions of that subunit. This Saccharopolyspora erythraea (strain ATCC 11635 / DSM 40517 / JCM 4748 / NBRC 13426 / NCIMB 8594 / NRRL 2338) protein is Large ribosomal subunit protein bL20.